We begin with the raw amino-acid sequence, 697 residues long: Potassium-transporting ATPase ATP-binding subunit (697 aa).

4 helical membrane passes run 55–75 (PIMF…FLPS), 79–99 (SIPG…VLFA), 245–265 (LTLI…YLGF), and 271–291 (VLVA…LSAI). Asp324 (4-aspartylphosphate intermediate) is an active-site residue. ATP is bound by residues Asp361, Glu365, 393–400 (FKAETRMS), and Lys412. 2 residues coordinate Mg(2+): Asp535 and Asp539. Transmembrane regions (helical) follow at residues 605–625 (FAII…LNIM), 633–653 (AILS…PLAM), and 677–697 (GGVI…GLFI).

This sequence belongs to the cation transport ATPase (P-type) (TC 3.A.3) family. Type IA subfamily. In terms of assembly, the system is composed of three essential subunits: KdpA, KdpB and KdpC.

The protein localises to the cell membrane. It carries out the reaction K(+)(out) + ATP + H2O = K(+)(in) + ADP + phosphate + H(+). Its function is as follows. Part of the high-affinity ATP-driven potassium transport (or Kdp) system, which catalyzes the hydrolysis of ATP coupled with the electrogenic transport of potassium into the cytoplasm. This subunit is responsible for energy coupling to the transport system and for the release of the potassium ions to the cytoplasm. In Bacillus cereus (strain ZK / E33L), this protein is Potassium-transporting ATPase ATP-binding subunit.